A 107-amino-acid polypeptide reads, in one-letter code: L-rhamnose mutarotase (107 aa).

Y18 lines the substrate pocket. H22 functions as the Proton donor in the catalytic mechanism. Substrate contacts are provided by residues Y41 and 76-77; that span reads WW.

The protein belongs to the rhamnose mutarotase family. In terms of assembly, homodimer.

It localises to the cytoplasm. The enzyme catalyses alpha-L-rhamnose = beta-L-rhamnose. The protein operates within carbohydrate metabolism; L-rhamnose metabolism. In terms of biological role, involved in the anomeric conversion of L-rhamnose. This chain is L-rhamnose mutarotase, found in Paraburkholderia xenovorans (strain LB400).